The sequence spans 174 residues: ATP-dependent protease subunit HslV (174 aa).

Residue T2 is part of the active site. Na(+)-binding residues include G157, C160, and T163.

The protein belongs to the peptidase T1B family. HslV subfamily. As to quaternary structure, a double ring-shaped homohexamer of HslV is capped on each side by a ring-shaped HslU homohexamer. The assembly of the HslU/HslV complex is dependent on binding of ATP.

Its subcellular location is the cytoplasm. It carries out the reaction ATP-dependent cleavage of peptide bonds with broad specificity.. Allosterically activated by HslU binding. Functionally, protease subunit of a proteasome-like degradation complex believed to be a general protein degrading machinery. This chain is ATP-dependent protease subunit HslV, found in Yersinia enterocolitica serotype O:8 / biotype 1B (strain NCTC 13174 / 8081).